Reading from the N-terminus, the 248-residue chain is MRTAIIAGNWKMNKTVKEAVELVKELKPLVKDAKCDVVVCPTYVCLPAVLEEVKGSNIKVGAQNMHFEESGAYTGEIAPKMLEELGVHYVIIGHSERRQYFNETDETVNKKVKKAFEHNLIPIVCCGESLEEREGNITEKVLEGQIKVGLKELSKEQVEKLVIAYEPIWAIGTGKTATDEQANETIGYIRTVVKAMYGESVADKIRIQYGGSVKPGTIKAQMAKEEIDGALVGGASLKAEDFAAIVNY.

Substrate is bound at residue 9 to 11 (NWK). The Electrophile role is filled by His-94. Catalysis depends on Glu-166, which acts as the Proton acceptor. Substrate is bound by residues Gly-172, Ser-212, and 233 to 234 (GG).

This sequence belongs to the triosephosphate isomerase family. Homodimer.

The protein resides in the cytoplasm. It carries out the reaction D-glyceraldehyde 3-phosphate = dihydroxyacetone phosphate. It functions in the pathway carbohydrate biosynthesis; gluconeogenesis. Its pathway is carbohydrate degradation; glycolysis; D-glyceraldehyde 3-phosphate from glycerone phosphate: step 1/1. Its function is as follows. Involved in the gluconeogenesis. Catalyzes stereospecifically the conversion of dihydroxyacetone phosphate (DHAP) to D-glyceraldehyde-3-phosphate (G3P). This is Triosephosphate isomerase from Clostridium botulinum (strain ATCC 19397 / Type A).